A 283-amino-acid polypeptide reads, in one-letter code: Beta-glucoside operon antiterminator (283 aa).

PRD domains lie at 65-170 (RIPL…SHMP) and 171-280 (EVMR…LQEQ).

It belongs to the transcriptional antiterminator BglG family. Phosphorylated and inactivated by ArbF (EII-Bgl). The degree of phosphorylation is dependent on the presence or absence of beta-glucosides which act as inducers of the operon expression. Addition of inducer result in the rapid dephosphorylation of ArbG.

Mediates the positive regulation of the beta-glucoside (arb) operon by functioning as a transcriptional antiterminator. This is an RNA-binding protein that recognizes a specific sequence located just upstream of two termination sites within the operon. This is Beta-glucoside operon antiterminator (arbG) from Dickeya chrysanthemi (Pectobacterium chrysanthemi).